Consider the following 40-residue polypeptide: Beta-glucosidase 1 (40 aa).

The catalysed reaction is Hydrolysis of terminal, non-reducing beta-D-glucosyl residues with release of beta-D-glucose.. The sequence is that of Beta-glucosidase 1 from Passalora fulva (Tomato leaf mold).